We begin with the raw amino-acid sequence, 380 residues long: Serpin B7 (380 aa).

Phosphoserine occurs at positions 217 and 223.

It belongs to the serpin family. Ov-serpin subfamily. As to expression, predominantly expressed in mesangial cells. Expressed in the epidermis of the whole body.

It is found in the cytoplasm. Might function as an inhibitor of Lys-specific proteases. Might influence the maturation of megakaryocytes via its action as a serpin. The sequence is that of Serpin B7 (SERPINB7) from Homo sapiens (Human).